The primary structure comprises 306 residues: MKIVFGIVSSQDLLIKINFPILINQLRNKKITWKNETWVDSGGYQIALYNLKISVKDVLEKYKTYNAYAFFSLDIPSIFSPLDRKNFEYFEYLYTKMEYIERIIPVIHLYPTREVDEAIDFYSQYTDYIAFGGIIASSKLKILIYTFPWYYYIRKYVKRLHVLGMSAPYFLQIFDTANSMDTTTYTKTASYREIFWFDGTRRYVGDRKERTLTKEEEEKLFEFLDKTNFPFEYDFSNVKILKTMNAWILKYNNWNIKNKYTIYAEKLRKMGLDSLVTEIIQNYKIANELKKEKQQNKKKNSIELEE.

Positions 277–306 (TEIIQNYKIANELKKEKQQNKKKNSIELEE) form a coiled coil.

This is an uncharacterized protein from Saccharolobus islandicus (Sulfolobus islandicus).